Reading from the N-terminus, the 421-residue chain is Alpha-tubulin N-acetyltransferase 1 (421 aa).

Positions 1-190 (MEFPFDVDAL…NNFVIFEGFF (190 aa)) constitute an N-acetyltransferase domain. Residue K56 is modified to N6-acetyllysine; by autocatalysis. 124–137 (FYIHESVQRHGHGR) is an acetyl-CoA binding site. K146 bears the N6-acetyllysine; by autocatalysis mark. 160–169 (SQKLLKFLNK) serves as a coordination point for acetyl-CoA. A disordered region spans residues 196–235 (PPAPSLRATRHSRAAAVDPTPAAPARKLPPKRAEGDIKPY). Low complexity predominate over residues 209–221 (AAAVDPTPAAPAR). Positions 226–235 (KRAEGDIKPY) are enriched in basic and acidic residues. An N6-acetyllysine; by autocatalysis mark is found at K233 and K244. The segment at 252–284 (PLNRAPRRATPPAHPPPRSSSLGNSPERGPLRP) is disordered. Phosphoserine is present on residues S272 and S276. R305 carries the asymmetric dimethylarginine modification. A disordered region spans residues 306 to 402 (LLLAADPGGS…PAQSWTVGGD (97 aa)). The residue at position 315 (S315) is a Phosphoserine. The residue at position 323 (R323) is an Omega-N-methylarginine. A compositionally biased stretch (polar residues) spans 342 to 354 (VNSSSPNTGNQDS). Residues 355 to 367 (KQGEQETKNRSAS) show a composition bias toward basic and acidic residues.

Belongs to the acetyltransferase ATAT1 family. In terms of assembly, component of the BBSome complex. Interacts with AP2 alpha-adaptins, including AP2A2, but not with AP1 gamma-adaptin (AP1G1/AP1G2); this interaction is required for efficient alpha-tubulin acetylation, hence clathrin-coated pits are sites of microtubule acetylation. In terms of processing, autoacetylation strongly increases tubulin acetylation.

Its subcellular location is the cytoplasm. It localises to the membrane. It is found in the clathrin-coated pit. The protein resides in the cell junction. The protein localises to the focal adhesion. Its subcellular location is the cell projection. It localises to the axon. It is found in the cytoskeleton. The protein resides in the spindle. It catalyses the reaction L-lysyl-[alpha-tubulin] + acetyl-CoA = N(6)-acetyl-L-lysyl-[alpha-tubulin] + CoA + H(+). Its function is as follows. Specifically acetylates 'Lys-40' in alpha-tubulin on the lumenal side of microtubules. Promotes microtubule destabilization and accelerates microtubule dynamics; this activity may be independent of acetylation activity. Acetylates alpha-tubulin with a slow enzymatic rate, due to a catalytic site that is not optimized for acetyl transfer. Enters the microtubule through each end and diffuses quickly throughout the lumen of microtubules. Acetylates only long/old microtubules because of its slow acetylation rate since it does not have time to act on dynamically unstable microtubules before the enzyme is released. Required for normal sperm flagellar function. Promotes directional cell locomotion and chemotaxis, through AP2A2-dependent acetylation of alpha-tubulin at clathrin-coated pits that are concentrated at the leading edge of migrating cells. May facilitate primary cilium assembly. The protein is Alpha-tubulin N-acetyltransferase 1 of Homo sapiens (Human).